Reading from the N-terminus, the 458-residue chain is Pyruvate kinase (458 aa).

Residue R33 participates in substrate binding. Residues N35, S37, and D67 each coordinate K(+). 35-38 (NASH) serves as a coordination point for ATP. Positions 74 and 148 each coordinate ATP. E214 serves as a coordination point for Mg(2+). Substrate is bound by residues G237, D238, and T270. D238 contributes to the Mg(2+) binding site.

The protein belongs to the pyruvate kinase family. Homotetramer. The cofactor is a divalent metal cation.

The enzyme catalyses pyruvate + ATP = phosphoenolpyruvate + ADP + H(+). Its pathway is carbohydrate degradation; glycolysis; pyruvate from D-glyceraldehyde 3-phosphate: step 5/5. With respect to regulation, not activated by classical allosteric effectors. The sequence is that of Pyruvate kinase (pyk) from Aeropyrum pernix (strain ATCC 700893 / DSM 11879 / JCM 9820 / NBRC 100138 / K1).